The primary structure comprises 582 residues: Adenine deaminase (582 aa).

It belongs to the metallo-dependent hydrolases superfamily. Adenine deaminase family. Mn(2+) serves as cofactor.

The catalysed reaction is adenine + H2O + H(+) = hypoxanthine + NH4(+). This Oceanobacillus iheyensis (strain DSM 14371 / CIP 107618 / JCM 11309 / KCTC 3954 / HTE831) protein is Adenine deaminase.